Consider the following 409-residue polypeptide: Terpredoxin reductase (409 aa).

FAD is bound at residue 7-38 (TTVIVGAGHAGTAAAFFLREFGYHGRVLLLSA). 151 to 159 (GGGFIGLEI) provides a ligand contact to NAD(+).

FAD serves as cofactor.

Functionally, the oxidation of alpha-terpineol by cytochrome p450-TERP requires the participation of a flavoprotein, terpredoxin reductase, and an iron-sulfur protein, terpredoxin, to mediate the transfer of electrons from NADH to P450 for oxygen activation. The polypeptide is Terpredoxin reductase (terPA) (Pseudomonas sp).